The sequence spans 342 residues: DNA primase small subunit PriS (342 aa).

Catalysis depends on residues D97, D99, and D276.

The protein belongs to the eukaryotic-type primase small subunit family. Heterodimer of a small subunit (PriS) and a large subunit (PriL). Mg(2+) is required as a cofactor. The cofactor is Mn(2+).

Functionally, catalytic subunit of DNA primase, an RNA polymerase that catalyzes the synthesis of short RNA molecules used as primers for DNA polymerase during DNA replication. The small subunit contains the primase catalytic core and has DNA synthesis activity on its own. Binding to the large subunit stabilizes and modulates the activity, increasing the rate of DNA synthesis while decreasing the length of the DNA fragments, and conferring RNA synthesis capability. The DNA polymerase activity may enable DNA primase to also catalyze primer extension after primer synthesis. May also play a role in DNA repair. The protein is DNA primase small subunit PriS of Thermococcus sibiricus (strain DSM 12597 / MM 739).